We begin with the raw amino-acid sequence, 151 residues long: D-aminoacyl-tRNA deacylase (151 aa).

The short motif at 137–138 (GP) is the Gly-cisPro motif, important for rejection of L-amino acids element.

The protein belongs to the DTD family. As to quaternary structure, homodimer.

It is found in the cytoplasm. It carries out the reaction glycyl-tRNA(Ala) + H2O = tRNA(Ala) + glycine + H(+). It catalyses the reaction a D-aminoacyl-tRNA + H2O = a tRNA + a D-alpha-amino acid + H(+). In terms of biological role, an aminoacyl-tRNA editing enzyme that deacylates mischarged D-aminoacyl-tRNAs. Also deacylates mischarged glycyl-tRNA(Ala), protecting cells against glycine mischarging by AlaRS. Acts via tRNA-based rather than protein-based catalysis; rejects L-amino acids rather than detecting D-amino acids in the active site. By recycling D-aminoacyl-tRNA to D-amino acids and free tRNA molecules, this enzyme counteracts the toxicity associated with the formation of D-aminoacyl-tRNA entities in vivo and helps enforce protein L-homochirality. The chain is D-aminoacyl-tRNA deacylase from Listeria monocytogenes serotype 4a (strain HCC23).